Consider the following 577-residue polypeptide: Outer spore wall assembly protein SHE10 (577 aa).

The first 23 residues, 1-23, serve as a signal peptide directing secretion; sequence MGKLIKLITTLTVLVSLLQYCCE. 2 coiled-coil regions span residues 379–416 and 513–561; these read NETR…ENVE and ILRS…EEDV. A compositionally biased stretch (basic and acidic residues) spans 525-545; it reads RERKERERKEREKAAAEEFQR. Residues 525–577 form a disordered region; it reads RERKERERKEREKAAAEEFQRQQELLRQQEEEDEEDVSYTSTSTITTTTTMTL. Positions 562–577 are enriched in low complexity; the sequence is SYTSTSTITTTTTMTL.

This sequence belongs to the SHE10 family. Component of the mitochondria-localized RNase mitochondrial RNA-processing (RNase MRP) composed of one single RNA encoded by the NME1 gene and at least 31 proteins. Absent in the nucleus-localized RNase MRP (NuMRP).

The protein localises to the mitochondrion. Its function is as follows. Involved in spore wall assembly. May be a component of the mitochondrial RNase MRP (MtMRP), a ribonucleoprotein endoribonuclease involved in the cleaving RNA transcripts to generate primers for DNA replication in mitochondria. The protein is Outer spore wall assembly protein SHE10 of Saccharomyces cerevisiae (strain YJM789) (Baker's yeast).